The chain runs to 85 residues: Large ribosomal subunit protein bL27 (85 aa).

Residues 1–20 are disordered; sequence MATKKAGGSTRNGRDSEAKR.

Belongs to the bacterial ribosomal protein bL27 family.

The sequence is that of Large ribosomal subunit protein bL27 from Histophilus somni (strain 129Pt) (Haemophilus somnus).